A 317-amino-acid chain; its full sequence is NADH kinase (317 aa).

It belongs to the NAD kinase family. Homodimer. Ubiquitous.

It localises to the cytoplasm. It catalyses the reaction NADH + ATP = ADP + NADPH + H(+). With respect to regulation, two-fold decrease in activity in the presence of PPi, iodoacetate or para-chloromercuribenzoate. Its function is as follows. Phosphorylates specifically NADH. Can phosphorylate NAD with a 100-fold decrease in efficiency compared to NADH. Prefers ATP as nucleoside triphosphate substrate. Can also utilize UTP, GTP and CTP. Key source of the cellular reductant NADPH which is an important antioxidant factor. The sequence is that of NADH kinase (NADK3) from Arabidopsis thaliana (Mouse-ear cress).